The following is a 535-amino-acid chain: Arylsulfatase K (535 aa).

The first 21 residues, 1–21, serve as a signal peptide directing secretion; it reads MGSGGPLLLLRGLLLVGAAYC. Positions 41 and 81 each coordinate Ca(2+). C81 functions as the Nucleophile in the catalytic mechanism. Position 81 is a 3-oxoalanine (Cys) (C81). Residue K129 coordinates substrate. N194 is a glycosylation site (N-linked (GlcNAc...) asparagine). H252 is a substrate binding site. N-linked (GlcNAc...) asparagine glycosylation is present at N263. Positions 314 and 315 each coordinate Ca(2+). N376, N414, and N499 each carry an N-linked (GlcNAc...) asparagine glycan.

This sequence belongs to the sulfatase family. It depends on Ca(2+) as a cofactor. The conversion to 3-oxoalanine (also known as C-formylglycine, FGly), of a serine or cysteine residue in prokaryotes and of a cysteine residue in eukaryotes, is critical for catalytic activity.

The protein localises to the secreted. The protein resides in the lysosome. The enzyme catalyses an aryl sulfate + H2O = a phenol + sulfate + H(+). The catalysed reaction is Hydrolysis of the 2-sulfate groups of the 2-O-sulfo-D-glucuronate residues of chondroitin sulfate, heparin and heparitin sulfate.. Its function is as follows. Catalyzes the hydrolysis of pseudosubstrates such as p-nitrocatechol sulfate and p-nitrophenyl sulfate. Catalyzes the hydrolysis of the 2-sulfate groups of the 2-O-sulfo-D-glucuronate residues of chondroitin sulfate, heparin and heparitin sulfate. Acts selectively on 2-sulfoglucuronate and lacks activity against 2-sulfoiduronate. In Gallus gallus (Chicken), this protein is Arylsulfatase K (ARSK).